Consider the following 1234-residue polypeptide: Stress response protein NST1 (1234 aa).

2 stretches are compositionally biased toward polar residues: residues 1-10 and 21-31; these read MSDTTDSTSR and YDNQSQPTTSE. Disordered stretches follow at residues 1 to 70, 149 to 175, 246 to 283, 513 to 608, 661 to 816, 924 to 945, and 1214 to 1234; these read MSDT…TSRV, KANN…AANA, QQRM…VNSR, TARE…EEEK, KKLK…ESQN, PNGL…RLNS, and GNNS…GLWN. Over residues 39–51 the composition is skewed to basic residues; that stretch reads NKKKKKKANKKHK. A compositionally biased stretch (low complexity) spans 161-175; the sequence is NGTSSASGANSAANA. Composition is skewed to basic and acidic residues over residues 263-273 and 513-527; these read ENPEVHGEHPH and TARE…KKDA. 2 stretches are compositionally biased toward acidic residues: residues 555–587 and 596–605; these read EYYE…DDLV and ASDTESEISE. The stretch at 633-826 forms a coiled coil; the sequence is KEKLSEDRTQ…QLELESAQLP (194 aa). 2 stretches are compositionally biased toward basic and acidic residues: residues 661 to 670 and 679 to 806; these read KKLKQKEKAK and AKEE…KEQQ. Low complexity-rich tracts occupy residues 929–941 and 1214–1227; these read SSTS…SSKS and GNNS…SSNG.

This sequence belongs to the NST1 family.

The protein resides in the cytoplasm. May act as a negative regulator of salt tolerance. The chain is Stress response protein NST1 (NST1) from Scheffersomyces stipitis (strain ATCC 58785 / CBS 6054 / NBRC 10063 / NRRL Y-11545) (Yeast).